A 1032-amino-acid chain; its full sequence is GPI inositol-deacylase (1032 aa).

N-linked (GlcNAc...) asparagine glycosylation is present at Asn12. Residues 15–35 traverse the membrane as a helical segment; the sequence is ILTLVSFFGLVLFYLTWYLYT. Ser195 is a catalytic residue. Residues Asn520 and Asn555 are each glycosylated (N-linked (GlcNAc...) asparagine). 2 helical membrane passes run 703–723 and 740–760; these read LATISFCVSIILLALVFQVKH and ICSPWVFGSILFTLSILTPIM. Residue Asn784 is glycosylated (N-linked (GlcNAc...) asparagine). 3 helical membrane-spanning segments follow: residues 805 to 825, 861 to 880, and 884 to 903; these read LWFIGPVFFVMGLGIVSLTFY, WANRRIIGVLFVLLVIPIYM, and FAYVVSCIIQSIQVIKILVA. An N-linked (GlcNAc...) asparagine glycan is attached at Asn907. A helical membrane pass occupies residues 916-936; it reads SLLMLMLWVLPINVPILVVFV. N-linked (GlcNAc...) asparagine glycosylation is found at Asn938 and Asn942. The next 2 membrane-spanning stretches (helical) occupy residues 943–963 and 985–1005; these read WTTPFSSHHNFLAILPVILLM and AFLAYYVFYCLVYGIRHTYWI.

This sequence belongs to the GPI inositol-deacylase family.

The protein localises to the endoplasmic reticulum membrane. Its function is as follows. Involved in inositol deacylation of GPI-anchored proteins which plays important roles in the quality control and ER-associated degradation of GPI-anchored proteins. The protein is GPI inositol-deacylase (BST1) of Debaryomyces hansenii (strain ATCC 36239 / CBS 767 / BCRC 21394 / JCM 1990 / NBRC 0083 / IGC 2968) (Yeast).